The following is a 153-amino-acid chain: MIKIDVVSECTLWSKKIKRNKTFFNSILKFFPKKYKFIGKKINLTILLSNNKNIKKLNKDFRNKNKPTDVLSFPFEKKFNPKKSNYLGDIVISYEFMNKPKNISILEFKQKVVKIFIHGFLHLLGHDHIKLKDFKKMIKEEDLIYKFIKTKVA.

Zn(2+) contacts are provided by histidine 118, histidine 122, and histidine 128.

This sequence belongs to the endoribonuclease YbeY family. Zn(2+) is required as a cofactor.

The protein localises to the cytoplasm. Functionally, single strand-specific metallo-endoribonuclease involved in late-stage 70S ribosome quality control and in maturation of the 3' terminus of the 16S rRNA. The sequence is that of Endoribonuclease YbeY from Pelagibacter ubique (strain HTCC1062).